The sequence spans 389 residues: Probable peptide chain release factor 1, mitochondrial (389 aa).

The residue at position 259 (Gln-259) is an N5-methylglutamine.

The protein belongs to the prokaryotic/mitochondrial release factor family. In terms of processing, methylation of glutamine in the GGQ triplet is conserved from bacteria to mammals.

The protein localises to the mitochondrion. In terms of biological role, mitochondrial peptide chain release factor that directs the termination of translation in response to the peptide chain termination codons UAA and UAG. The sequence is that of Probable peptide chain release factor 1, mitochondrial from Caenorhabditis elegans.